The primary structure comprises 954 residues: Glycine dehydrogenase (decarboxylating) (954 aa).

Position 704 is an N6-(pyridoxal phosphate)lysine (Lys-704).

This sequence belongs to the GcvP family. The glycine cleavage system is composed of four proteins: P, T, L and H. Pyridoxal 5'-phosphate is required as a cofactor.

The catalysed reaction is N(6)-[(R)-lipoyl]-L-lysyl-[glycine-cleavage complex H protein] + glycine + H(+) = N(6)-[(R)-S(8)-aminomethyldihydrolipoyl]-L-lysyl-[glycine-cleavage complex H protein] + CO2. The glycine cleavage system catalyzes the degradation of glycine. The P protein binds the alpha-amino group of glycine through its pyridoxal phosphate cofactor; CO(2) is released and the remaining methylamine moiety is then transferred to the lipoamide cofactor of the H protein. The protein is Glycine dehydrogenase (decarboxylating) of Rhizobium etli (strain ATCC 51251 / DSM 11541 / JCM 21823 / NBRC 15573 / CFN 42).